Here is a 130-residue protein sequence, read N- to C-terminus: MYKAETRGISVTVQSRFVEEESSPTESRYFFAYTVEIVNNGSEQVQLRSRHWRIIDGHGACQEVRGTGVVGKQPVLEPGESFCYTSGCPLNTPDGLMAGSYTMATVAGESFEAEIPAFSLDSPHVRRSLH.

The ApaG domain maps to 3–127; that stretch reads KAETRGISVT…FSLDSPHVRR (125 aa).

The chain is Protein ApaG from Methylobacterium radiotolerans (strain ATCC 27329 / DSM 1819 / JCM 2831 / NBRC 15690 / NCIMB 10815 / 0-1).